A 228-amino-acid polypeptide reads, in one-letter code: Phosphoribosylformylglycinamidine synthase subunit PurQ (228 aa).

A Glutamine amidotransferase type-1 domain is found at 3 to 225 (FAVLVFPGSN…LTTLKSGVVT (223 aa)). The active-site Nucleophile is the Cys86. Active-site residues include His194 and Glu196.

In terms of assembly, part of the FGAM synthase complex composed of 1 PurL, 1 PurQ and 2 PurS subunits.

Its subcellular location is the cytoplasm. The enzyme catalyses N(2)-formyl-N(1)-(5-phospho-beta-D-ribosyl)glycinamide + L-glutamine + ATP + H2O = 2-formamido-N(1)-(5-O-phospho-beta-D-ribosyl)acetamidine + L-glutamate + ADP + phosphate + H(+). It carries out the reaction L-glutamine + H2O = L-glutamate + NH4(+). It functions in the pathway purine metabolism; IMP biosynthesis via de novo pathway; 5-amino-1-(5-phospho-D-ribosyl)imidazole from N(2)-formyl-N(1)-(5-phospho-D-ribosyl)glycinamide: step 1/2. Part of the phosphoribosylformylglycinamidine synthase complex involved in the purines biosynthetic pathway. Catalyzes the ATP-dependent conversion of formylglycinamide ribonucleotide (FGAR) and glutamine to yield formylglycinamidine ribonucleotide (FGAM) and glutamate. The FGAM synthase complex is composed of three subunits. PurQ produces an ammonia molecule by converting glutamine to glutamate. PurL transfers the ammonia molecule to FGAR to form FGAM in an ATP-dependent manner. PurS interacts with PurQ and PurL and is thought to assist in the transfer of the ammonia molecule from PurQ to PurL. This Latilactobacillus sakei subsp. sakei (strain 23K) (Lactobacillus sakei subsp. sakei) protein is Phosphoribosylformylglycinamidine synthase subunit PurQ.